The following is a 1029-amino-acid chain: Serine/threonine-protein kinase KSP1 (1029 aa).

The Protein kinase domain occupies 18 to 351 (YQKIEDISEG…TELQNLSEYT (334 aa)). Residues 27-35 (GSYGYVSLA) and Lys47 each bind ATP. A compositionally biased stretch (acidic residues) spans 56-79 (GQYDGPQDDENDCDSSDCDDDEDT). The segment at 56 to 105 (GQYDGPQDDENDCDSSDCDDDEDTKVDTDRHENENGNASSNNGSSREKKH) is disordered. Positions 80 to 89 (KVDTDRHENE) are enriched in basic and acidic residues. A compositionally biased stretch (low complexity) spans 90–99 (NGNASSNNGS). Catalysis depends on Asp207, which acts as the Proton acceptor. The tract at residues 377-397 (VPPSSAPVSLPTPISSSNKQH) is disordered. A phosphoserine mark is found at Ser416 and Ser419. Phosphothreonine occurs at positions 501, 504, and 526. Phosphoserine is present on Ser529. The disordered stretch occupies residues 532–570 (HRYMEGFSNNNNKQYRQNRNYNNNNNNSNNNHGSNYNNF). Positions 538–570 (FSNNNNKQYRQNRNYNNNNNNSNNNHGSNYNNF) are enriched in low complexity. Ser646 bears the Phosphoserine mark. Positions 732 to 824 (STNHNNNGNN…SDSKELEQER (93 aa)) are disordered. A compositionally biased stretch (low complexity) spans 734–743 (NHNNNGNNNH). A compositionally biased stretch (polar residues) spans 744-754 (IDTNSTTNQYH). Over residues 813–824 (HSSDSKELEQER) the composition is skewed to basic and acidic residues. A phosphoserine mark is found at Ser845 and Ser884. The segment at 949 to 978 (EYEGESDKMAHGKMEGGDNESSSTSPDERQ) is disordered. Over residues 953–964 (ESDKMAHGKMEG) the composition is skewed to basic and acidic residues. At Thr1005 the chain carries Phosphothreonine. Ser1014 bears the Phosphoserine mark.

Belongs to the protein kinase superfamily. Ser/Thr protein kinase family. CK2 subfamily. Post-translationally, phosphorylated by PKA in a TORC1-dependent manner. Phosphorylation at PKA consensus sites RRxS/T decreases upon rapamycin treatment.

Its subcellular location is the nucleus. The enzyme catalyses L-seryl-[protein] + ATP = O-phospho-L-seryl-[protein] + ADP + H(+). The catalysed reaction is L-threonyl-[protein] + ATP = O-phospho-L-threonyl-[protein] + ADP + H(+). May act on PRP20. The sequence is that of Serine/threonine-protein kinase KSP1 (KSP1) from Saccharomyces cerevisiae (strain ATCC 204508 / S288c) (Baker's yeast).